Here is a 294-residue protein sequence, read N- to C-terminus: Cytidine deaminase (294 aa).

CMP/dCMP-type deaminase domains are found at residues 48–168 (DEDA…FGPK) and 186–294 (LTGD…VLLG). Substrate is bound at residue 89–91 (NME). His-102 serves as a coordination point for Zn(2+). Residue Glu-104 is the Proton donor of the active site. 2 residues coordinate Zn(2+): Cys-129 and Cys-132.

The protein belongs to the cytidine and deoxycytidylate deaminase family. Homodimer. Zn(2+) is required as a cofactor.

The enzyme catalyses cytidine + H2O + H(+) = uridine + NH4(+). It catalyses the reaction 2'-deoxycytidine + H2O + H(+) = 2'-deoxyuridine + NH4(+). In terms of biological role, this enzyme scavenges exogenous and endogenous cytidine and 2'-deoxycytidine for UMP synthesis. The chain is Cytidine deaminase from Escherichia fergusonii (strain ATCC 35469 / DSM 13698 / CCUG 18766 / IAM 14443 / JCM 21226 / LMG 7866 / NBRC 102419 / NCTC 12128 / CDC 0568-73).